We begin with the raw amino-acid sequence, 249 residues long: Probable GDP-mannose transporter 2 (249 aa).

Residues 1–15 (MIYTSSKSLQYLAVP) are Lumenal-facing. Residues 16 to 36 (IYTIFKNLTIILIAYGEVLFF) traverse the membrane as a helical segment. Residues 37-47 (GGKVTSMELTS) are Cytoplasmic-facing. A helical transmembrane segment spans residues 48–68 (FIMMVLSSVVATWGDQQAIAI). Residues 69–84 (KASSLEDLDQELVEST) are Lumenal-facing. Residues 85–105 (IFVLNPGYLWMFTNCISSALF) form a helical membrane-spanning segment. Topologically, residues 106–122 (VLIMRKRIRLTNFKDYD) are cytoplasmic. Residues 123 to 143 (TMFYNNVLALPLLLVFSFIME) traverse the membrane as a helical segment. Residues 144–159 (DWSTKNLSVNLSADSL) are Lumenal-facing. Residues Asn149 and Asn153 are each glycosylated (N-linked (GlcNAc...) asparagine). Residues 160-180 (AAMVISGLMSVGISYCSGWCV) form a helical membrane-spanning segment. Topologically, residues 181 to 186 (RVTSST) are cytoplasmic. A helical membrane pass occupies residues 187–207 (TYSMVGALNKLPIALAGLVFF). At 208-211 (DAPK) the chain is on the lumenal side. Residues 212 to 232 (NFLSFFSIFLGFLSGLLYAVA) form a helical membrane-spanning segment. Over 233-249 (KQKKIQQQKVLAATLEK) the chain is Cytoplasmic.

This sequence belongs to the TPT transporter family. SLC35D subfamily.

The protein resides in the golgi apparatus membrane. It localises to the cytoplasmic vesicle membrane. Its subcellular location is the endoplasmic reticulum membrane. In terms of biological role, involved in the import of GDP-mannose from the cytoplasm into the Golgi lumen. The sequence is that of Probable GDP-mannose transporter 2 (HVG1) from Saccharomyces cerevisiae (strain RM11-1a) (Baker's yeast).